A 97-amino-acid chain; its full sequence is Carboxysome shell protein CsoS1B (97 aa).

Residues 8–93 (ALGMIETRGL…PHKEVEPVLT (86 aa)) enclose the BMC domain.

It belongs to the bacterial microcompartments protein family. CsoS1 subfamily. In terms of assembly, homohexamer with a small central pore.

It is found in the carboxysome. Its function is as follows. One of shell proteins of the carboxysome, a polyhedral inclusion where RuBisCO (ribulose bisphosphate carboxylase, ccbL-ccbS) is sequestered. Assembles into hexamers which make sheets that form the facets of the polyhedral carboxysome. The shell probably limits the diffusion of CO(2) into and out of the carboxysome. The sequence is that of Carboxysome shell protein CsoS1B from Hydrogenovibrio crunogenus (strain DSM 25203 / XCL-2) (Thiomicrospira crunogena).